A 117-amino-acid polypeptide reads, in one-letter code: Colipase (117 aa).

An N-terminal signal peptide occupies residues 1–22 (MNIFNILLPIVVLLLVFGLTAA). 5 disulfides stabilise this stretch: Cys-39–Cys-50, Cys-45–Cys-61, Cys-49–Cys-83, Cys-71–Cys-91, and Cys-85–Cys-109.

This sequence belongs to the colipase family. As to quaternary structure, forms a 1:1 stoichiometric complex with pancreatic lipase.

Its subcellular location is the secreted. Functionally, colipase is a cofactor of pancreatic lipase. It allows the lipase to anchor itself to the lipid-water interface. Without colipase the enzyme is washed off by bile salts, which have an inhibitory effect on the lipase. The protein is Colipase (clps) of Xenopus tropicalis (Western clawed frog).